A 613-amino-acid polypeptide reads, in one-letter code: Probable potassium transport system protein Kup (613 aa).

11 consecutive transmembrane segments (helical) span residues 38 to 58 (VLGV…LKYL), 91 to 111 (WILV…GMIT), 128 to 148 (PSFG…LFLF), 159 to 179 (FFGP…LVEI), 206 to 226 (FLVL…YADM), 238 to 258 (WSLL…AVLL), 270 to 290 (ALVP…ATII), 328 to 348 (IYVP…VAGF), 357 to 377 (AYGV…YYVA), 387 to 407 (GLNL…GASV), and 410 to 430 (LFHG…LMLT).

The protein belongs to the HAK/KUP transporter (TC 2.A.72) family.

It localises to the cell inner membrane. It carries out the reaction K(+)(in) + H(+)(in) = K(+)(out) + H(+)(out). Transport of potassium into the cell. Likely operates as a K(+):H(+) symporter. The chain is Probable potassium transport system protein Kup from Chlorobaculum tepidum (strain ATCC 49652 / DSM 12025 / NBRC 103806 / TLS) (Chlorobium tepidum).